The sequence spans 156 residues: ATP synthase subunit b', chloroplastic (156 aa).

Residues 20–42 (NGTLPLMALQFLTLMVLLNTIFY) traverse the membrane as a helical segment.

The protein belongs to the ATPase B chain family. F-type ATPases have 2 components, F(1) - the catalytic core - and F(0) - the membrane proton channel. F(1) has five subunits: alpha(3), beta(3), gamma(1), delta(1), epsilon(1). F(0) has four main subunits: a(1), b(1), b'(1) and c(10-14). The alpha and beta chains form an alternating ring which encloses part of the gamma chain. F(1) is attached to F(0) by a central stalk formed by the gamma and epsilon chains, while a peripheral stalk is formed by the delta, b and b' chains.

Its subcellular location is the plastid. The protein resides in the chloroplast thylakoid membrane. Functionally, f(1)F(0) ATP synthase produces ATP from ADP in the presence of a proton or sodium gradient. F-type ATPases consist of two structural domains, F(1) containing the extramembraneous catalytic core and F(0) containing the membrane proton channel, linked together by a central stalk and a peripheral stalk. During catalysis, ATP synthesis in the catalytic domain of F(1) is coupled via a rotary mechanism of the central stalk subunits to proton translocation. Its function is as follows. Component of the F(0) channel, it forms part of the peripheral stalk, linking F(1) to F(0). The b'-subunit is a diverged and duplicated form of b found in plants and photosynthetic bacteria. In Pyropia yezoensis (Susabi-nori), this protein is ATP synthase subunit b', chloroplastic.